Consider the following 114-residue polypeptide: Large ribosomal subunit protein uL24 (114 aa).

This sequence belongs to the universal ribosomal protein uL24 family. In terms of assembly, part of the 50S ribosomal subunit.

Functionally, one of two assembly initiator proteins, it binds directly to the 5'-end of the 23S rRNA, where it nucleates assembly of the 50S subunit. Its function is as follows. One of the proteins that surrounds the polypeptide exit tunnel on the outside of the subunit. The chain is Large ribosomal subunit protein uL24 from Thermomicrobium roseum (strain ATCC 27502 / DSM 5159 / P-2).